Reading from the N-terminus, the 389-residue chain is MSEYLFTSESVSEGHPDKVADQVSDAILDAILAQDPKARVAAETLVNTGLCVLAGEITTTAQVDYIKVARETIKRIGYNSSELGFDANGCAVGVYYDQQSPDIAQGVNEGEGIDLNQGAGDQGLMFGYACDETPTLMPFAIYYSHRLMQRQSELRKDGRLPWLRPDAKAQLTVVYDSETGKVKRIDTVVLSTQHDPSVGYEELKNAVIEQIIKPVLPSELLTDETKYLINPTGRFVIGGPQGDCGLTGRKIIVDTYGGAAPHGGGAFSGKDPSKVDRSAAYACRYVAKNIVAAGLATQCQIQVSYAIGVAEPTSISIDTFGTGKISEEKLITLVREHFDLRPKGIVQMLDLLRPIYSKSAAYGHFGREEPEFTWERTDKAAALRAAAGL.

An ATP-binding site is contributed by His-15. A Mg(2+)-binding site is contributed by Asp-17. A K(+)-binding site is contributed by Glu-43. The L-methionine site is built by Glu-56 and Gln-99. The interval Gln-99–Glu-109 is flexible loop. ATP contacts are provided by residues Asp-166–Lys-168, Arg-234–Phe-235, Asp-243, Arg-249–Lys-250, Ala-266, and Lys-270. Asp-243 is an L-methionine binding site. Lys-274 is an L-methionine binding site.

It belongs to the AdoMet synthase family. In terms of assembly, homotetramer; dimer of dimers. Mg(2+) serves as cofactor. It depends on K(+) as a cofactor.

Its subcellular location is the cytoplasm. The catalysed reaction is L-methionine + ATP + H2O = S-adenosyl-L-methionine + phosphate + diphosphate. It functions in the pathway amino-acid biosynthesis; S-adenosyl-L-methionine biosynthesis; S-adenosyl-L-methionine from L-methionine: step 1/1. Catalyzes the formation of S-adenosylmethionine (AdoMet) from methionine and ATP. The overall synthetic reaction is composed of two sequential steps, AdoMet formation and the subsequent tripolyphosphate hydrolysis which occurs prior to release of AdoMet from the enzyme. The chain is S-adenosylmethionine synthase from Neisseria meningitidis serogroup A / serotype 4A (strain DSM 15465 / Z2491).